The primary structure comprises 235 residues: Phosphoglycolate phosphatase (235 aa).

Residue aspartate 14 is the Nucleophile of the active site. Residues aspartate 14, aspartate 16, and aspartate 177 each contribute to the Mg(2+) site.

The protein belongs to the HAD-like hydrolase superfamily. CbbY/CbbZ/Gph/YieH family. Mg(2+) is required as a cofactor.

It carries out the reaction 2-phosphoglycolate + H2O = glycolate + phosphate. Its pathway is organic acid metabolism; glycolate biosynthesis; glycolate from 2-phosphoglycolate: step 1/1. In terms of biological role, specifically catalyzes the dephosphorylation of 2-phosphoglycolate. Is involved in the dissimilation of the intracellular 2-phosphoglycolate formed during the DNA repair of 3'-phosphoglycolate ends, a major class of DNA lesions induced by oxidative stress. In Neisseria meningitidis serogroup A / serotype 4A (strain DSM 15465 / Z2491), this protein is Phosphoglycolate phosphatase.